The following is a 471-amino-acid chain: MAAKVFTQNPIYSQSLVRDKTPQQKHNLDHFSISQHTSKRLVVSSSTMSPPISSSPLSLPSSSSSQAIPPSRAPAVTLPLSRVWREIQGSNNWENLIEPLSPILQQEITRYGNLLSASYKGFDLNPNSKRYLSCKYGKKNLLKESGIHDPDGYQVTKYIYATPDINLNPIKNEPNRARWIGYVAVSSDESVKRLGRRDILVTFRGTVTNHEWLANLKSSLTPARLDPHNPRPDVKVESGFLGLYTSGESESKFGLESCREQLLSEISRLMNKHKGEEISITLAGHSMGSSLAQLLAYDIAELGMNQRRDEKPVPVTVFSFAGPRVGNLGFKKRCEELGVKVLRITNVNDPITKLPGFLFNENFRSLGGVYELPWSCSCYTHVGVELTLDFFDVQNISCVHDLETYITLVNRPRCSKLAVNEDNFGGEFLNRTSELMFSKGRRQALHFTNAATNAAYLLCSISNHMLYYNIF.

The transit peptide at 1–88 (MAAKVFTQNP…PLSRVWREIQ (88 aa)) directs the protein to the chloroplast. The segment at 44 to 71 (SSSTMSPPISSSPLSLPSSSSSQAIPPS) is disordered. The GXSXG motif lies at 284 to 288 (GHSMG). Serine 286 acts as the Acyl-ester intermediate in catalysis. Active-site charge relay system residues include aspartate 349 and histidine 400.

This sequence belongs to the AB hydrolase superfamily. Lipase family. As to expression, expressed in leaves and seedlings. Not detected in flowers, siliques or roots.

It localises to the plastid. The protein localises to the chloroplast. The catalysed reaction is a 1,2-diacyl-3-O-(beta-D-galactosyl)-sn-glycerol + 2 H2O = 3-beta-D-galactosyl-sn-glycerol + 2 a fatty acid + 2 H(+). It catalyses the reaction a 1,2-diacyl-sn-glycero-3-phosphocholine + H2O = a 2-acyl-sn-glycero-3-phosphocholine + a fatty acid + H(+). It carries out the reaction a 1,2-diacyl-3-O-[alpha-D-galactosyl-(1-&gt;6)-beta-D-galactosyl]-sn-glycerol + H2O = acyl-3-O-[alpha-D-galactosyl-(1-&gt;6)-beta-D-galactosyl]-sn-glycerol + a fatty acid + H(+). Functionally, sn-1-specific phospholipase that releases free fatty acids from phosphatidylcholine. Has a higher galactolipase activity than phospholipase A1 activity when digalactosyldiacylglycerol (DGDG) is used as substrate. Catalyzes the initial step of jasmonic acid biosynthesis. Required for the biosynthesis of basal-level endogenous jasmonate in vegetative tissues. Regulates leaves growth. Not essential for jasmonate biosynthesis after wounding or upon pathogen infection. This chain is Galactolipase DONGLE, chloroplastic, found in Arabidopsis thaliana (Mouse-ear cress).